The sequence spans 361 residues: Zinc transporter ZIP13 (361 aa).

Residues 1–6 (MPGCPC) lie on the Lumenal side of the membrane. A helical membrane pass occupies residues 7-27 (PGCGMAGQRLLFLTVLALELL). Over 28–68 (ERAGGSQPALRSLGAAAACRLDSKESESWGALLSGERLDTW) the chain is Cytoplasmic. A helical transmembrane segment spans residues 69 to 89 (ICSLLGSLMVGLSGVFPLLVI). At 90–108 (PLEMGTMLQSEAGAWRLKQ) the chain is on the lumenal side. Residues 109–129 (LLSFALGGLLGNVFLHLLPEA) traverse the membrane as a helical segment. The Cytoplasmic segment spans residues 130-150 (WAYTCNISPGVEGQSLQRQQQ). Residues 151–171 (LGLWVIAGFLTFLALEKMFLN) form a helical membrane-spanning segment. Residues 172 to 233 (CKEEDPSQAP…TIDNFTHGLA (62 aa)) lie on the Lumenal side of the membrane. The helical transmembrane segment at 234-254 (VAASFLVSKKIGLLTTMAILL) threads the bilayer. The short motif at 255–260 (HEIPHE) is the XEXPHE-motif element. Residues 255–276 (HEIPHEVGDFAILLRAGFDRWT) are Cytoplasmic-facing. A helical membrane pass occupies residues 277–297 (AAKLQFSTALGGLLGACFAIC). Over 298–307 (TQSPKGVEET) the chain is Lumenal. The helical transmembrane segment at 308 to 328 (VVWTLPFTSGGFLYVALVNVL) threads the bilayer. The Cytoplasmic segment spans residues 329 to 340 (PDLLEEDDPWHL). The helical transmembrane segment at 341–361 (NPPLPTGTPCSRCCCSAPVSW) threads the bilayer.

The protein belongs to the ZIP transporter (TC 2.A.5) family. Homodimer.

It localises to the golgi apparatus membrane. It is found in the cytoplasmic vesicle membrane. Its subcellular location is the endoplasmic reticulum membrane. It catalyses the reaction Zn(2+)(in) = Zn(2+)(out). In terms of biological role, functions as a zinc transporter transporting Zn(2+) from the Golgi apparatus to the cytosol and thus influences the zinc level at least in areas of the cytosol. May regulate beige adipocyte differentiation. This Rattus norvegicus (Rat) protein is Zinc transporter ZIP13.